Here is a 314-residue protein sequence, read N- to C-terminus: Olfactory receptor 4K2 (314 aa).

Topologically, residues 1–25 (MDVGNKSTMSEFVLLGLSNSWELQM) are extracellular. Asn-5 carries an N-linked (GlcNAc...) asparagine glycan. The chain crosses the membrane as a helical span at residues 26-49 (FFFMVFSLLYVATMVGNSLIVITV). At 50-57 (IVDPHLHS) the chain is on the cytoplasmic side. A helical membrane pass occupies residues 58–79 (PMYFLLTNLSIIDMSLASFATP). The Extracellular portion of the chain corresponds to 80–100 (KMITDYLTGHKTISFDGCLTQ). The cysteines at positions 97 and 189 are disulfide-linked. The helical transmembrane segment at 101–120 (IFFLHLFTGTEIILLMAMSF) threads the bilayer. Over 121 to 139 (DRYIAICKPLHYASVISPQ) the chain is Cytoplasmic. Residues 140–158 (VCVALVVASWIMGVMHSMS) traverse the membrane as a helical segment. Topologically, residues 159–195 (QVIFALTLPFCGPYEVDSFFCDLPVVFQLACVDTYVL) are extracellular. Residues 196-219 (GLFMISTSGIIALSCFIVLFNSYV) form a helical membrane-spanning segment. Residues 220–235 (IVLVTVKHHSSRGSSK) lie on the Cytoplasmic side of the membrane. Residues 236–258 (ALSTCTAHFIVVFLFFGPCIFIY) form a helical membrane-spanning segment. Residues 259–269 (MWPLSSFLTDK) are Extracellular-facing. The chain crosses the membrane as a helical span at residues 270 to 289 (ILSVFYTIFTPTLNPIIYTL). Residues 290 to 314 (RNQEVKIAMRKLKNRFLNFNKAMPS) lie on the Cytoplasmic side of the membrane.

The protein belongs to the G-protein coupled receptor 1 family.

The protein localises to the cell membrane. Odorant receptor. This is Olfactory receptor 4K2 (OR4K2) from Homo sapiens (Human).